The sequence spans 611 residues: tRNA uridine 5-carboxymethylaminomethyl modification enzyme MnmG (611 aa).

Residue 14 to 19 participates in FAD binding; it reads GAGHAG. 274 to 288 contacts NAD(+); it reads GPRYCPSIEDKIVKF.

It belongs to the MnmG family. Homodimer. Heterotetramer of two MnmE and two MnmG subunits. The cofactor is FAD.

Its subcellular location is the cytoplasm. Its function is as follows. NAD-binding protein involved in the addition of a carboxymethylaminomethyl (cmnm) group at the wobble position (U34) of certain tRNAs, forming tRNA-cmnm(5)s(2)U34. In Chlamydia caviae (strain ATCC VR-813 / DSM 19441 / 03DC25 / GPIC) (Chlamydophila caviae), this protein is tRNA uridine 5-carboxymethylaminomethyl modification enzyme MnmG.